We begin with the raw amino-acid sequence, 156 residues long: Small ribosomal subunit protein uS7 (156 aa).

This sequence belongs to the universal ribosomal protein uS7 family. In terms of assembly, part of the 30S ribosomal subunit. Contacts proteins S9 and S11.

Functionally, one of the primary rRNA binding proteins, it binds directly to 16S rRNA where it nucleates assembly of the head domain of the 30S subunit. Is located at the subunit interface close to the decoding center, probably blocks exit of the E-site tRNA. This is Small ribosomal subunit protein uS7 from Bradyrhizobium diazoefficiens (strain JCM 10833 / BCRC 13528 / IAM 13628 / NBRC 14792 / USDA 110).